The chain runs to 251 residues: Triosephosphate isomerase (251 aa).

9–11 (NWK) lines the substrate pocket. The active-site Electrophile is His94. The active-site Proton acceptor is Glu166. Substrate contacts are provided by residues Gly172, Ser211, and 232-233 (GG).

Belongs to the triosephosphate isomerase family. As to quaternary structure, homodimer.

The protein localises to the cytoplasm. The enzyme catalyses D-glyceraldehyde 3-phosphate = dihydroxyacetone phosphate. It functions in the pathway carbohydrate biosynthesis; gluconeogenesis. The protein operates within carbohydrate degradation; glycolysis; D-glyceraldehyde 3-phosphate from glycerone phosphate: step 1/1. In terms of biological role, involved in the gluconeogenesis. Catalyzes stereospecifically the conversion of dihydroxyacetone phosphate (DHAP) to D-glyceraldehyde-3-phosphate (G3P). In Stenotrophomonas maltophilia (strain K279a), this protein is Triosephosphate isomerase.